Here is a 492-residue protein sequence, read N- to C-terminus: NADPH:adrenodoxin oxidoreductase, mitochondrial (492 aa).

The N-terminal 32 residues, 1 to 32, are a transit peptide targeting the mitochondrion; it reads MAPRCWRWWPWSSWTRTRLPPSRSIQNFGQHF. Alanine 49, glutamate 70, leucine 78, and valine 114 together coordinate FAD. Residues 185-188, 229-230, and glutamate 241 each bind NADP(+); these read QGNV and RR. Phosphoserine occurs at positions 311 and 318. FAD contacts are provided by residues tryptophan 399 and 406-408; that span reads GVI. Glycine 406 is an NADP(+) binding site.

This sequence belongs to the ferredoxin--NADP reductase type 1 family. As to quaternary structure, monomer. Interacts directly with FDX1. FAD serves as cofactor. As to expression, detected in adrenal cortex and corpus luteum (at protein level).

The protein resides in the mitochondrion inner membrane. The enzyme catalyses 2 reduced [adrenodoxin] + NADP(+) + H(+) = 2 oxidized [adrenodoxin] + NADPH. It catalyses the reaction 2 reduced [2Fe-2S]-[ferredoxin] + NADP(+) + H(+) = 2 oxidized [2Fe-2S]-[ferredoxin] + NADPH. Its pathway is steroid metabolism; cholesterol metabolism. In terms of biological role, serves as the first electron transfer protein in all the mitochondrial P450 systems including cholesterol side chain cleavage in all steroidogenic tissues, steroid 11-beta hydroxylation in the adrenal cortex, 25-OH-vitamin D3-24 hydroxylation in the kidney, and sterol C-27 hydroxylation in the liver. Also acts as a ferredoxin--NADP(+) reductase essential for coenzyme Q biosynthesis: together with FDX2, transfers the electrons required for the hydroxylation reaction performed by COQ6. The sequence is that of NADPH:adrenodoxin oxidoreductase, mitochondrial (FDXR) from Bos taurus (Bovine).